Consider the following 517-residue polypeptide: MTKNIHDQRILILDFGSQYTQLVARRVREIGVYCELWSWDVEEADIREFNPDGIILSGGPESVTEDNSPRAPQYVFDSGVPVLGVCYGMQTMAEQLGGKVAGSTEREFGYAQVKVSGESALFKDLELTQDVWMSHGDKVVEIPADFVKVGETDTCPYAAMANEEKKYYGVQFHPEVTHTKGGLQMLENFVLGVCGCERLWTSESIIEDAVARIKEQVGDDEVILGLSGGVDSSVVAMLVHRAIGDKLTCVFVDNGLLRLNEGQQVMDMFGDQFGLNIIKVDAEDRFLKALEGKSDPEEKRKTIGHVFVDVFDEESKKLKNAKWLAQGTIYPDVIESAASKTGKAHVIKSHHNVGGLPDDMEMGLVEPLRELFKDEVRKIGLELGLPYNMLYRHPFPGPGLGVRVLGEIKKEYCDLLRRADAIFIEELHAADLYNKVSQAFTVFLPVRSVGVMGDGRKYDWVVSLRAVETIDFMTAHWAHLPYDFLGKVSNRIINEVDGISRVVYDISGKPPATIEWE.

The 191-residue stretch at 9 to 199 (RILILDFGSQ…VLGVCGCERL (191 aa)) folds into the Glutamine amidotransferase type-1 domain. Cys-86 serves as the catalytic Nucleophile. Catalysis depends on residues His-173 and Glu-175. The 193-residue stretch at 200 to 392 (WTSESIIEDA…LGLPYNMLYR (193 aa)) folds into the GMPS ATP-PPase domain. ATP is bound at residue 227–233 (SGGVDSS).

Homodimer.

It catalyses the reaction XMP + L-glutamine + ATP + H2O = GMP + L-glutamate + AMP + diphosphate + 2 H(+). Its pathway is purine metabolism; GMP biosynthesis; GMP from XMP (L-Gln route): step 1/1. Catalyzes the synthesis of GMP from XMP. The protein is GMP synthase [glutamine-hydrolyzing] of Vibrio campbellii (strain ATCC BAA-1116).